The following is a 108-amino-acid chain: Large ribosomal subunit protein uL11 (108 aa).

The protein belongs to the universal ribosomal protein uL11 family. As to quaternary structure, part of the ribosomal stalk of the 50S ribosomal subunit. Interacts with L10 and the large rRNA to form the base of the stalk. L10 forms an elongated spine to which L12 dimers bind in a sequential fashion forming a multimeric L10(L12)X complex.

Forms part of the ribosomal stalk which helps the ribosome interact with GTP-bound translation factors. In Aeropyrum pernix (strain ATCC 700893 / DSM 11879 / JCM 9820 / NBRC 100138 / K1), this protein is Large ribosomal subunit protein uL11 (rpl11).